A 104-amino-acid chain; its full sequence is MISTEKSSDAVAMHCPSGDQHNSEKGLACDVTSVCDTVRLLMSYIRMLSPCVIARNCPSGDIFAQVAFNPFCVPTGVTNWNMLAYNGHLQMNEPTLKLSNIYRQ.

The interval 1–24 (MISTEKSSDAVAMHCPSGDQHNSE) is disordered.

This is an uncharacterized protein from Saccharomyces cerevisiae (strain ATCC 204508 / S288c) (Baker's yeast).